A 291-amino-acid polypeptide reads, in one-letter code: Undecaprenyl-diphosphatase (291 aa).

Transmembrane regions (helical) follow at residues 1-21, 48-68, 102-122, 126-146, 162-182, 203-223, 231-251, and 267-287; these read MFIIELIKGIILGVVEGLTEF, SAFTFKIVIQLGSVFAAAWVF, LHVLVGMVPAGILGLLFDDFI, LFSVPTVMIGLFVGAIYMIIA, INYFQAFVIGISQAVAMWPGF, SDFTFIMAVPIMLAASGLSLL, IADIPFYILGFLAAFTVGLIA, and FAIYRIVLVIFIAILYFGFGI.

It belongs to the UppP family.

The protein localises to the cell membrane. It carries out the reaction di-trans,octa-cis-undecaprenyl diphosphate + H2O = di-trans,octa-cis-undecaprenyl phosphate + phosphate + H(+). Its function is as follows. Catalyzes the dephosphorylation of undecaprenyl diphosphate (UPP). Confers resistance to bacitracin. The protein is Undecaprenyl-diphosphatase of Staphylococcus aureus (strain bovine RF122 / ET3-1).